A 60-amino-acid polypeptide reads, in one-letter code: Ribosome biogenesis protein Nop10 (60 aa).

The segment at 37-60 (APAPFDPADPHGKYRRALKERRRL) is disordered. The segment covering 49-60 (KYRRALKERRRL) has biased composition (basic residues).

Belongs to the NOP10 family.

Functionally, involved in ribosome biogenesis; more specifically in 18S rRNA pseudouridylation and in cleavage of pre-rRNA. This is Ribosome biogenesis protein Nop10 from Halobacterium salinarum (strain ATCC 29341 / DSM 671 / R1).